Consider the following 220-residue polypeptide: ATP-dependent dethiobiotin synthetase BioD (220 aa).

Residue 11-16 (GVGKTF) coordinates ATP. Threonine 15 lines the Mg(2+) pocket. Lysine 36 is an active-site residue. Residue threonine 40 coordinates substrate. Residues aspartate 48 and 107–110 (EGAG) contribute to the ATP site. Residues aspartate 48 and glutamate 107 each contribute to the Mg(2+) site.

The protein belongs to the dethiobiotin synthetase family. As to quaternary structure, homodimer. It depends on Mg(2+) as a cofactor.

It localises to the cytoplasm. It catalyses the reaction (7R,8S)-7,8-diammoniononanoate + CO2 + ATP = (4R,5S)-dethiobiotin + ADP + phosphate + 3 H(+). The protein operates within cofactor biosynthesis; biotin biosynthesis; biotin from 7,8-diaminononanoate: step 1/2. Its function is as follows. Catalyzes a mechanistically unusual reaction, the ATP-dependent insertion of CO2 between the N7 and N8 nitrogen atoms of 7,8-diaminopelargonic acid (DAPA, also called 7,8-diammoniononanoate) to form a ureido ring. In Aquifex aeolicus (strain VF5), this protein is ATP-dependent dethiobiotin synthetase BioD.